The sequence spans 77 residues: Metallothionein-like protein 2 (77 aa).

Belongs to the metallothionein superfamily. Type 15 family.

Its function is as follows. Metallothioneins have a high content of cysteine residues that bind various heavy metals. In Trifolium repens (Creeping white clover), this protein is Metallothionein-like protein 2 (MT1A).